The following is a 266-amino-acid chain: Anamorsin homolog (266 aa).

The tract at residues M1–L164 is N-terminal SAM-like domain. The linker stretch occupies residues S165 to K185. The [4Fe-4S] cluster site is built by C229, C232, C240, and C243. 2 consecutive short sequence motifs (cx2C motif) follow at residues C229–C232 and C240–C243. The segment at C229–C243 is fe-S binding site B.

The protein belongs to the anamorsin family. Monomer. [4Fe-4S] cluster is required as a cofactor.

The protein localises to the cytoplasm. It localises to the mitochondrion intermembrane space. In terms of biological role, component of the cytosolic iron-sulfur (Fe-S) protein assembly (CIA) machinery. Required for the maturation of extramitochondrial Fe-S proteins. Part of an electron transfer chain functioning in an early step of cytosolic Fe-S biogenesis, facilitating the de novo assembly of a [4Fe-4S] cluster on the cytosolic Fe-S scaffold complex. Electrons are transferred from NADPH via a FAD- and FMN-containing diflavin oxidoreductase. Together with the diflavin oxidoreductase, also required for the assembly of the diferric tyrosyl radical cofactor of ribonucleotide reductase (RNR), probably by providing electrons for reduction during radical cofactor maturation in the catalytic small subunit. The chain is Anamorsin homolog from Plasmodium falciparum (isolate 3D7).